The chain runs to 244 residues: 6-carboxyhexanoate--CoA ligase (244 aa).

The protein belongs to the BioW family. As to quaternary structure, homodimer. It depends on Mg(2+) as a cofactor.

The enzyme catalyses heptanedioate + ATP + CoA = 6-carboxyhexanoyl-CoA + AMP + diphosphate. It participates in metabolic intermediate metabolism; pimeloyl-CoA biosynthesis; pimeloyl-CoA from pimelate: step 1/1. Catalyzes the transformation of pimelate into pimeloyl-CoA with concomitant hydrolysis of ATP to AMP. The polypeptide is 6-carboxyhexanoate--CoA ligase (Hydrogenobacter thermophilus (strain DSM 6534 / IAM 12695 / TK-6)).